The following is an 845-amino-acid chain: Protein SEY1 (845 aa).

A coiled-coil region spans residues 1 to 29 (MELNVDSAKQLLAEHEQELQSAHDAHSIL). At 1-749 (MELNVDSAKQ…KRATVSSIAQ (749 aa)) the chain is on the cytoplasmic side. The 223-residue stretch at 112–334 (GFGYDLCAVL…DPNFVFKTEY (223 aa)) folds into the GB1/RHD3-type G domain. 122–129 (GSQSTGKS) contributes to the GTP binding site. Residues 750 to 770 (VPLWMYGVMLVLGWNELMAIL) form a helical membrane-spanning segment. The Lumenal segment spans residues 771-773 (SSP). The chain crosses the membrane as a helical span at residues 774-794 (VYFAFLLVLIASAYIVWRLNL). At 795 to 845 (SGPLISVLRAVANEVHRLADAQLRTHFSQPLREPRPPAESRPAEQIELEPN) the chain is on the cytoplasmic side. The segment at 823 to 845 (QPLREPRPPAESRPAEQIELEPN) is disordered. Over residues 826-838 (REPRPPAESRPAE) the composition is skewed to basic and acidic residues.

Belongs to the TRAFAC class dynamin-like GTPase superfamily. GB1/RHD3 GTPase family. RHD3 subfamily.

Its subcellular location is the endoplasmic reticulum membrane. Its function is as follows. Cooperates with the reticulon proteins and tubule-shaping DP1 family proteins to generate and maintain the structure of the tubular endoplasmic reticulum network. Has GTPase activity, which is required for its function in ER organization. The protein is Protein SEY1 of Mycosarcoma maydis (Corn smut fungus).